The sequence spans 33 residues: U-limacoditoxin(13)-As11 (33 aa).

The N-terminal stretch at 1–19 (MFKLLLVLALTMLAQSALA) is a signal peptide. F32 bears the Phenylalanine amide mark.

The protein belongs to the FARP (FMRFamide related peptide) family. In terms of tissue distribution, expressed by the venom secretory cell of the spine. The spine is a cuticular structure containing a single large nucleated venom-secreting cell at its base. It is an independent unit capable of producing, storing and injecting venom. On the back of A.stimulea caterpillars, spines are grouped together by 50 to 100 to form scoli, of which there are eight.

It localises to the secreted. Is toxic when injected into Drosophila melanogaster. Also shows a low anthelmintic activity against the parasitic nematode H.contortus (drug susceptible Kirby isolate). This chain is U-limacoditoxin(13)-As11, found in Acharia stimulea (Saddleback caterpillar moth).